We begin with the raw amino-acid sequence, 181 residues long: MSAARESHPHGVKRSASPDDDLGSSNWEAADLGNEERKQKFLRLMGAGKKEHTGRLVIGDHKSTSHFRTGEEDKKINEELESQYQQSMDSKLSGRYRRHCGLGFSEVDDHDGEGDVAGDDDDDDSPDPESPDDSESDSESEKEESTEELQAAEHPDEVEDSKNKKDAKSNYKMMFVKSSGS.

The disordered stretch occupies residues Met-1–Ser-181. Lys-13 is covalently cross-linked (Glycyl lysine isopeptide (Lys-Gly) (interchain with G-Cter in SUMO2)). 2 positions are modified to phosphoserine: Ser-15 and Ser-17. The segment covering Gly-48–Glu-78 has biased composition (basic and acidic residues). Lys-62 participates in a covalent cross-link: Glycyl lysine isopeptide (Lys-Gly) (interchain with G-Cter in SUMO2). At Ser-63 the chain carries Phosphoserine. A Glycyl lysine isopeptide (Lys-Gly) (interchain with G-Cter in SUMO2) cross-link involves residue Lys-75. Phosphoserine is present on residues Ser-87, Ser-125, and Ser-145. Residues Glu-106 to Glu-147 are compositionally biased toward acidic residues. Residues Ala-151–Ser-169 are compositionally biased toward basic and acidic residues. Lys-172 and Lys-177 each carry N6-acetyllysine.

The protein belongs to the SMAP family.

This chain is Small acidic protein (SMAP), found in Bos taurus (Bovine).